Here is a 103-residue protein sequence, read N- to C-terminus: Large ribosomal subunit protein bL21 (103 aa).

Belongs to the bacterial ribosomal protein bL21 family. In terms of assembly, part of the 50S ribosomal subunit. Contacts protein L20.

In terms of biological role, this protein binds to 23S rRNA in the presence of protein L20. The sequence is that of Large ribosomal subunit protein bL21 from Shewanella loihica (strain ATCC BAA-1088 / PV-4).